We begin with the raw amino-acid sequence, 711 residues long: Long-chain-fatty-acid--CoA ligase 4 (711 aa).

The helical; Signal-anchor for type III membrane protein transmembrane segment at 8-28 threads the bilayer; that stretch reads LTIILLPVHLLITIYSALIFI. The Cytoplasmic portion of the chain corresponds to 29 to 711; that stretch reads PWYFLTNAKK…KDIERMYGGK (683 aa). Position 447 is a phosphoserine (serine 447).

Belongs to the ATP-dependent AMP-binding enzyme family. Requires Mg(2+) as cofactor.

It is found in the mitochondrion outer membrane. Its subcellular location is the peroxisome membrane. It localises to the microsome membrane. The protein localises to the endoplasmic reticulum membrane. The protein resides in the cell membrane. It carries out the reaction a long-chain fatty acid + ATP + CoA = a long-chain fatty acyl-CoA + AMP + diphosphate. The enzyme catalyses (5Z,8Z,11Z,14Z)-eicosatetraenoate + ATP + CoA = (5Z,8Z,11Z,14Z)-eicosatetraenoyl-CoA + AMP + diphosphate. It catalyses the reaction hexadecanoate + ATP + CoA = hexadecanoyl-CoA + AMP + diphosphate. The catalysed reaction is (E)-hexadec-2-enoate + ATP + CoA = (2E)-hexadecenoyl-CoA + AMP + diphosphate. It carries out the reaction 15-hydroxy-(5Z,8Z,11Z,13E)-eicosatetraenoate + ATP + CoA = 15-hydroxy-(5Z,8Z,11Z,13E)-eicosatetraenoyl-CoA + AMP + diphosphate. The enzyme catalyses 12-hydroxy-(5Z,8Z,10E,14Z)-eicosatetraenoate + ATP + CoA = 12-hydroxy-(5Z,8Z,10E,14Z)-eicosatetraenoyl-CoA + AMP + diphosphate. It catalyses the reaction 5-hydroxy-(6E,8Z,11Z,14Z)-eicosatetraenoate + ATP + CoA = 5-hydroxy-(6E,8Z,11Z,14Z)-eicosatetraenoyl-CoA + AMP + diphosphate. The catalysed reaction is 5,6-epoxy-(8Z,11Z,14Z)-eicosatrienoate + ATP + CoA = 5,6-epoxy-(8Z,11Z,14Z)-eicosatrienoyl-CoA + AMP + diphosphate. It carries out the reaction 14,15-epoxy-(5Z,8Z,11Z)-eicosatrienoate + ATP + CoA = 14,15-epoxy-(5Z,8Z,11Z)-eicosatrienoyl-CoA + AMP + diphosphate. The enzyme catalyses 11,12-epoxy-(5Z,8Z,14Z)-eicosatrienoate + ATP + CoA = 11,12-epoxy-(5Z,8Z,14Z)-eicosatrienoyl-CoA + AMP + diphosphate. It catalyses the reaction 8,9-epoxy-(5Z,11Z,14Z)-eicosatrienoate + ATP + CoA = 8,9-epoxy-(5Z,11Z,14Z)-eicosatrienoyl-CoA + AMP + diphosphate. Its activity is regulated as follows. Both triacsin C and rosiglitazone inhibit arachidonoyl-CoA ligase activity. Functionally, catalyzes the conversion of long-chain fatty acids to their active form acyl-CoA for both synthesis of cellular lipids, and degradation via beta-oxidation. Preferentially activates arachidonate and eicosapentaenoate as substrates. Preferentially activates 8,9-EET &gt; 14,15-EET &gt; 5,6-EET &gt; 11,12-EET. Modulates glucose-stimulated insulin secretion by regulating the levels of unesterified EETs. Modulates prostaglandin E2 secretion. This is Long-chain-fatty-acid--CoA ligase 4 (ACSL4) from Homo sapiens (Human).